The following is a 456-amino-acid chain: Glutamate--tRNA ligase 2 (456 aa).

Residues 8–18 (PSPTGYIHIGN) carry the 'HIGH' region motif. Residues 249–253 (GLSKR) carry the 'KMSKS' region motif. Position 252 (Lys252) interacts with ATP.

This sequence belongs to the class-I aminoacyl-tRNA synthetase family. Glutamate--tRNA ligase type 1 subfamily. As to quaternary structure, monomer.

The protein resides in the cytoplasm. The enzyme catalyses tRNA(Glu) + L-glutamate + ATP = L-glutamyl-tRNA(Glu) + AMP + diphosphate. Catalyzes the attachment of glutamate to tRNA(Glu) in a two-step reaction: glutamate is first activated by ATP to form Glu-AMP and then transferred to the acceptor end of tRNA(Glu). The protein is Glutamate--tRNA ligase 2 of Bartonella bacilliformis (strain ATCC 35685 / KC583 / Herrer 020/F12,63).